Here is an 878-residue protein sequence, read N- to C-terminus: Alanine--tRNA ligase (878 aa).

Positions 566, 570, 668, and 672 each coordinate Zn(2+).

This sequence belongs to the class-II aminoacyl-tRNA synthetase family. Requires Zn(2+) as cofactor.

The protein localises to the cytoplasm. The enzyme catalyses tRNA(Ala) + L-alanine + ATP = L-alanyl-tRNA(Ala) + AMP + diphosphate. Functionally, catalyzes the attachment of alanine to tRNA(Ala) in a two-step reaction: alanine is first activated by ATP to form Ala-AMP and then transferred to the acceptor end of tRNA(Ala). Also edits incorrectly charged Ser-tRNA(Ala) and Gly-tRNA(Ala) via its editing domain. The polypeptide is Alanine--tRNA ligase (Bacillus subtilis (strain 168)).